A 192-amino-acid chain; its full sequence is Adenylate kinase (192 aa).

ATP is bound at residue Gly-10–Thr-15. The interval Ser-30–Val-59 is NMP. Residues Thr-31, Arg-36, Ala-57–Val-59, Gly-85–Arg-88, and Gln-92 each bind AMP. Residues Arg-126–Asp-142 form an LID region. Arg-127 contributes to the ATP binding site. Arg-139 and Arg-150 together coordinate AMP. Position 178 (Ile-178) interacts with ATP.

The protein belongs to the adenylate kinase family. As to quaternary structure, monomer.

The protein resides in the cytoplasm. It catalyses the reaction AMP + ATP = 2 ADP. The protein operates within purine metabolism; AMP biosynthesis via salvage pathway; AMP from ADP: step 1/1. Its function is as follows. Catalyzes the reversible transfer of the terminal phosphate group between ATP and AMP. Plays an important role in cellular energy homeostasis and in adenine nucleotide metabolism. The sequence is that of Adenylate kinase from Bartonella tribocorum (strain CIP 105476 / IBS 506).